Consider the following 367-residue polypeptide: MSFNTFGHLFRVTTWGESHGPALGATVDGCPPGVPITEEALQVWLDKRKPGQNKFTTQRREPDAVEILSGVFEGQSTGSPIQLMIRNADQRSKDYGDIAEKFRPGHADITYWQKYGIRDYRGGGRSSARETAARVAAGGVARAALGALVPDLRITGYMTQMGPHGIDRARFDWEQIDQNPFWTPDAAAAEDWAAYLDGLRKAGSSVGAVIEVTARGVPVGLGAPIYAKLDTDLAAAMMSINAVKAVEIGEGMAAASLTGEANADEIFMGGDGPEYSSNHAGGILGGISTGQDVVVRFAVKPTSSILTTRQTITKSGAPAEIITKGRHDPCVGIRAVPVAEAMMACVLLDHLLLHRGQVGDGPRGAIG.

R48 is a binding site for NADP(+). FMN is bound by residues 125-127, 241-242, G285, 300-304, and R326; these read RSS, NA, and KPTSS.

This sequence belongs to the chorismate synthase family. In terms of assembly, homotetramer. Requires FMNH2 as cofactor.

It carries out the reaction 5-O-(1-carboxyvinyl)-3-phosphoshikimate = chorismate + phosphate. The protein operates within metabolic intermediate biosynthesis; chorismate biosynthesis; chorismate from D-erythrose 4-phosphate and phosphoenolpyruvate: step 7/7. In terms of biological role, catalyzes the anti-1,4-elimination of the C-3 phosphate and the C-6 proR hydrogen from 5-enolpyruvylshikimate-3-phosphate (EPSP) to yield chorismate, which is the branch point compound that serves as the starting substrate for the three terminal pathways of aromatic amino acid biosynthesis. This reaction introduces a second double bond into the aromatic ring system. The polypeptide is Chorismate synthase (Dinoroseobacter shibae (strain DSM 16493 / NCIMB 14021 / DFL 12)).